We begin with the raw amino-acid sequence, 474 residues long: AAA-ATPase At3g28610 (474 aa).

Positions 1 to 25 (MMGNMFGSSLASLFFLWATIQQIFP) are cleaved as a signal peptide. 244 to 251 (GPPGTGKS) serves as a coordination point for ATP.

This sequence belongs to the AAA ATPase family. BCS1 subfamily. Mg(2+) is required as a cofactor.

It carries out the reaction ATP + H2O = ADP + phosphate + H(+). In Arabidopsis thaliana (Mouse-ear cress), this protein is AAA-ATPase At3g28610.